Reading from the N-terminus, the 129-residue chain is Histone H2A.J (129 aa).

Residues 1–22 form a disordered region; the sequence is MSGRGKQGGKVRAKAKSRSSRA. N6-acetyllysine occurs at positions 6 and 10. Over residues 7–19 the composition is skewed to basic residues; that stretch reads QGGKVRAKAKSRS. At K10 the chain carries N6-lactoyllysine; alternate. Position 105 is an N5-methylglutamine (Q105). Phosphothreonine; by DCAF1 is present on T121.

It belongs to the histone H2A family. As to quaternary structure, the nucleosome is a histone octamer containing two molecules each of H2A, H2B, H3 and H4 assembled in one H3-H4 heterotetramer and two H2A-H2B heterodimers. The octamer wraps approximately 147 bp of DNA. Glutamine methylation at Gln-105 (H2AQ104me) by FBL is specifically dedicated to polymerase I. It is present at 35S ribosomal DNA locus and impairs binding of the FACT complex. In terms of processing, monoubiquitination of Lys-120 (H2AXK119ub) gives a specific tag for epigenetic transcriptional repression. Following DNA double-strand breaks (DSBs), it is ubiquitinated through 'Lys-63' linkage of ubiquitin moieties. Post-translationally, phosphorylation on Ser-2 (H2AS1ph) is enhanced during mitosis. Phosphorylation on Ser-2 by RPS6KA5/MSK1 directly represses transcription. Acetylation of H3 inhibits Ser-2 phosphorylation by RPS6KA5/MSK1. Phosphorylation at Thr-121 (H2AT120ph) by DCAF1 is present in the regulatory region of many tumor suppresor genes and down-regulates their transcription.

The protein localises to the nucleus. The protein resides in the chromosome. Core component of nucleosome. Nucleosomes wrap and compact DNA into chromatin, limiting DNA accessibility to the cellular machineries which require DNA as a template. Histones thereby play a central role in transcription regulation, DNA repair, DNA replication and chromosomal stability. DNA accessibility is regulated via a complex set of post-translational modifications of histones, also called histone code, and nucleosome remodeling. This Bos taurus (Bovine) protein is Histone H2A.J.